The sequence spans 170 residues: 2S seed storage protein 2 (170 aa).

An N-terminal signal peptide occupies residues 1–21 (MANKLFLVCATFALCFLLTNA). 2 consecutive propeptides follow at residues 22–37 (SIYRTVVEFDEDDASN) and 73–88 (GPSLDDEFDLEDDIEN).

This sequence belongs to the 2S seed storage albumins family. The mature protein consists of a small and a large chain linked by disulfide bonds.

In terms of biological role, this is a 2S seed storage protein. The polypeptide is 2S seed storage protein 2 (AT2S2) (Arabidopsis thaliana (Mouse-ear cress)).